A 387-amino-acid chain; its full sequence is Polyadenylate-binding protein RBP45A (387 aa).

RRM domains follow at residues 60–140 (KSLW…WAQA), 154–233 (HTIF…PAAN), and 260–332 (TTIF…WGRS). Positions 329-342 (WGRSPNKQSDQAQW) are enriched in polar residues. Positions 329–387 (WGRSPNKQSDQAQWNGGGYYGYPPQPQGGYGYAAQPPTQDPNAYYGGYTGYGNYQQQRQ) are disordered.

The protein belongs to the polyadenylate-binding RBP45 family. In terms of assembly, interacts with the poly(A) tail of mRNA in nucleus. Mostly expressed in seedlings, and, to a lower extent, in leaves, stems, and flowers. Present in immature anther tissues (tapetum cells) and mature pollen grains.

It localises to the nucleus. Its function is as follows. Heterogeneous nuclear ribonucleoprotein (hnRNP)-protein binding the poly(A) tail of mRNA and probably involved in some steps of pre-mRNA maturation. The chain is Polyadenylate-binding protein RBP45A (RBP45A) from Arabidopsis thaliana (Mouse-ear cress).